Reading from the N-terminus, the 567-residue chain is MAQVQRMSRLMVKTLRDDPADAETLSHKLLVRAGYVRRNAAGIWSWLPLGKKVLDNISNVVREEMDAIGAQEVLLPALLPKEPYEASGRWEEYGDLLFRLKDRKGGDYLLGPTHEEIFTQTVKDQCTSYKDLPVMLYQIQTKYRDEARPRSGVLRGREFQMKDSYSFDTTDEGLAHSYALHRAAYIKIFERLGLDHRIVSAVSGAMGGSASEEFLAPAAAGEDTFADCPNCDYAANTEAVTFALAPVDGSAHGAVEELDTPDTPTIETLAAHLGVPASATLKNLLVKVDGEIVAVGVPGHREVDLGKLGEHLAPAVVELVTAEDFVGRDDLVRGYVGPQGLEKVRYLADPRVAPGTSWITGANKEGKHARNVVAGRDFEVDEYLDVVVVEEGDPCPKCGTGLVLDRAIEIGHIFQLGRKYADTFQLDVLGQQGKPVRVTMGSYGIGVSRAVAALTEQTADDKGLCWPREIAPADVHVVAAGKALQTELALDVSEKLNAAGLRVLVDDRPGVSPGVKFTDSELIGVPKILVAGRRSADGVLELKDRRTGEREELTVDEAIARLTADLA.

Belongs to the class-II aminoacyl-tRNA synthetase family. ProS type 1 subfamily. In terms of assembly, homodimer.

It localises to the cytoplasm. The catalysed reaction is tRNA(Pro) + L-proline + ATP = L-prolyl-tRNA(Pro) + AMP + diphosphate. Its function is as follows. Catalyzes the attachment of proline to tRNA(Pro) in a two-step reaction: proline is first activated by ATP to form Pro-AMP and then transferred to the acceptor end of tRNA(Pro). As ProRS can inadvertently accommodate and process non-cognate amino acids such as alanine and cysteine, to avoid such errors it has two additional distinct editing activities against alanine. One activity is designated as 'pretransfer' editing and involves the tRNA(Pro)-independent hydrolysis of activated Ala-AMP. The other activity is designated 'posttransfer' editing and involves deacylation of mischarged Ala-tRNA(Pro). The misacylated Cys-tRNA(Pro) is not edited by ProRS. The chain is Proline--tRNA ligase from Streptomyces griseus subsp. griseus (strain JCM 4626 / CBS 651.72 / NBRC 13350 / KCC S-0626 / ISP 5235).